Here is a 349-residue protein sequence, read N- to C-terminus: Macrophage-capping protein (349 aa).

Met-1 carries the N-acetylmethionine modification. 3 Gelsolin-like repeats span residues 28 to 107 (KLKP…DLFM), 147 to 222 (KNIR…AEMI), and 264 to 342 (LTKV…PIFK). The short motif at 138-147 (RKLYQVKGKK) is the Nuclear localization signal element. Ser-338 is modified (phosphoserine).

Belongs to the villin/gelsolin family. Interacts with NUP62. Interacts with NUTF2 and RAN; involved in CAPG nuclear import. In terms of processing, phosphorylated.

It is found in the nucleus. It localises to the cytoplasm. Its subcellular location is the melanosome. The protein localises to the cell projection. The protein resides in the lamellipodium. It is found in the ruffle. Its function is as follows. Calcium-sensitive protein which reversibly blocks the barbed ends of actin filaments but does not sever preformed actin filaments. May play an important role in macrophage function. May play a role in regulating cytoplasmic and/or nuclear structures through potential interactions with actin. May bind DNA. Uncapping occurs either when Ca(2+) falls or when the concentration of polyphosphoinositide rises, both at low and high Ca(2+). The protein is Macrophage-capping protein (Capg) of Rattus norvegicus (Rat).